We begin with the raw amino-acid sequence, 264 residues long: Thymidylate synthase (264 aa).

Arg21 is a dUMP binding site. Residue His51 coordinates (6R)-5,10-methylene-5,6,7,8-tetrahydrofolate. 126 to 127 (RR) is a binding site for dUMP. Cys146 acts as the Nucleophile in catalysis. DUMP contacts are provided by residues 166–169 (RSCD), Asn177, and 207–209 (HLY). A (6R)-5,10-methylene-5,6,7,8-tetrahydrofolate-binding site is contributed by Asp169. A (6R)-5,10-methylene-5,6,7,8-tetrahydrofolate-binding site is contributed by Ala263.

It belongs to the thymidylate synthase family. Bacterial-type ThyA subfamily. In terms of assembly, homodimer.

It is found in the cytoplasm. It carries out the reaction dUMP + (6R)-5,10-methylene-5,6,7,8-tetrahydrofolate = 7,8-dihydrofolate + dTMP. It participates in pyrimidine metabolism; dTTP biosynthesis. Functionally, catalyzes the reductive methylation of 2'-deoxyuridine-5'-monophosphate (dUMP) to 2'-deoxythymidine-5'-monophosphate (dTMP) while utilizing 5,10-methylenetetrahydrofolate (mTHF) as the methyl donor and reductant in the reaction, yielding dihydrofolate (DHF) as a by-product. This enzymatic reaction provides an intracellular de novo source of dTMP, an essential precursor for DNA biosynthesis. In Shewanella sp. (strain ANA-3), this protein is Thymidylate synthase.